The following is a 395-amino-acid chain: MATFTDAEIDDLFETSGTIIDSIITAQGKPVETVGRSAIPQGKTKALSAAWEKHESIQPPASQDTPDRQNRSDKQPSTPEQMTPQNSPPATSTDQPPTQAAGEAGDTQLKTGASNSLLSMLDKLSNKSSNAKKGPWSSLQEGHHQLPTQQQGSQPSRGNSQERPQNRANAAPGDRGTDANTAYHGQWEESQLSAGATPHALRSGQSQDNTPASVDHVQLPVDFVQAMMSMMEAISQRVSKVDYQLDLILKQTSSIPMMRSEIQQLKTSVAVMEANLGMMKILDPGCANVSSLSDLRAVARSHPVLVSGPGDPSPYVTQGGEMTLNKLSQPVQHPSELIKPATVGGPDIGVEKDTVRALITSRPMHPSSSAKLLSKLDAAGSIEEIRKIKRLAVNG.

Disordered stretches follow at residues 31 to 109 (VETV…DTQL) and 126 to 214 (NKSS…PASV). Residues 65 to 74 (TPDRQNRSDK) are compositionally biased toward basic and acidic residues. Composition is skewed to polar residues over residues 75–98 (QPST…QPPT), 146–168 (LPTQ…QNRA), and 203–212 (SGQSQDNTPA). Positions 222-285 (DFVQAMMSMM…LGMMKILDPG (64 aa)) are multimerization.

This sequence belongs to the rubulavirus/avulavirus P protein family. Homotetramer. Interacts (via multimerization domain) with polymerase L; this interaction forms the polymerase L-P complex. Interacts (via N-terminus) with N0 (via Ncore); this interaction allows P to chaperon N0 to avoid N polymerization before encapsidation. Interacts (via C-terminus) with N-RNA template; this interaction positions the polymerase on the template for both transcription and replication.

Functionally, essential cofactor of the RNA polymerase L that plays a central role in the transcription and replication by forming the polymerase complex with RNA polymerase L and recruiting L to the genomic N-RNA template for RNA synthesis. Also plays a central role in the encapsidation of nascent RNA chains by forming the encapsidation complex with the nucleocapsid protein N (N-P complex). Acts as a chaperone for newly synthesized free N protein, so-called N0, allowing encapsidation of nascent RNA chains during replication. The nucleoprotein protein N prevents excessive phosphorylation of P, which leads to down-regulation of viral transcription/ replication. Participates, together with N, in the formation of viral factories (viroplasms), which are large inclusions in the host cytoplasm where replication takes place. The sequence is that of Phosphoprotein (P/C) from Gallus gallus (Chicken).